Reading from the N-terminus, the 451-residue chain is uncharacterized protein (451 aa).

Positions 50-147 constitute an HD domain; that stretch reads RFEHSLGTMF…DVDADRMDYL (98 aa).

This is an uncharacterized protein from Methanocaldococcus jannaschii (strain ATCC 43067 / DSM 2661 / JAL-1 / JCM 10045 / NBRC 100440) (Methanococcus jannaschii).